The sequence spans 273 residues: tRNA (guanine-N(7)-)-methyltransferase (273 aa).

S-adenosyl-L-methionine-binding residues include Gly86, Glu109, Arg111, Asn142, Ala143, and Leu162. The active site involves Asp165. The alphaC helix stretch occupies residues 166-174 (PHFKKTKHK). 2 residues coordinate S-adenosyl-L-methionine: Thr240 and Glu242. The segment at 240 to 248 (TEEGKKVQR) is alpha6 helix.

The protein belongs to the class I-like SAM-binding methyltransferase superfamily. TrmB family. In terms of assembly, catalytic component of the METTL1-WDR4 complex, composed of mettl1 and wdr4.

It localises to the nucleus. It catalyses the reaction guanosine(46) in tRNA + S-adenosyl-L-methionine = N(7)-methylguanosine(46) in tRNA + S-adenosyl-L-homocysteine. It carries out the reaction a guanosine in mRNA + S-adenosyl-L-methionine = an N(7)-methylguanosine in mRNA + S-adenosyl-L-homocysteine. The enzyme catalyses a guanosine in miRNA + S-adenosyl-L-methionine = an N(7)-methylguanosine in miRNA + S-adenosyl-L-homocysteine. The protein operates within tRNA modification; N(7)-methylguanine-tRNA biosynthesis. Functionally, catalytic component of METTL1-WDR4 methyltransferase complex that mediates the formation of N(7)-methylguanine in a subset of RNA species, such as tRNAs, mRNAs and microRNAs (miRNAs). Catalyzes the formation of N(7)-methylguanine at position 46 (m7G46) in a large subset of tRNAs that contain the 5'-RAGGU-3' motif within the variable loop. M7G46 interacts with C13-G22 in the D-loop to stabilize tRNA tertiary structure and protect tRNAs from decay. Also acts as a methyltransferase for a subset of internal N(7)-methylguanine in mRNAs. Internal N(7)-methylguanine methylation of mRNAs in response to stress promotes their relocalization to stress granules, thereby suppressing their translation. Also methylates a specific subset of miRNAs. The protein is tRNA (guanine-N(7)-)-methyltransferase (mettl1) of Xenopus laevis (African clawed frog).